The following is a 564-amino-acid chain: Probable diguanylate cyclase DgcQ (564 aa).

2 helical membrane passes run 20–40 (LGPG…STLL) and 360–380 (IALT…WYVI). The 136-residue stretch at 428–563 (HPFSVIQVDL…GRNRVFASDN (136 aa)) folds into the GGDEF domain. Aspartate 436 is a binding site for Mg(2+). Substrate-binding residues include asparagine 444, histidine 449, and aspartate 453. Glutamate 479 is a Mg(2+) binding site. Glutamate 479 serves as the catalytic Proton acceptor.

Homodimer. Mg(2+) serves as cofactor.

The protein localises to the cell inner membrane. The enzyme catalyses 2 GTP = 3',3'-c-di-GMP + 2 diphosphate. Its pathway is glycan metabolism; bacterial cellulose biosynthesis. It functions in the pathway purine metabolism; 3',5'-cyclic di-GMP biosynthesis. Catalyzes the synthesis of cyclic-di-GMP (c-di-GMP) via the condensation of 2 GTP molecules. Cyclic-di-GMP is a second messenger which controls cell surface-associated traits in bacteria. Involved in the regulation of cellulose production. The chain is Probable diguanylate cyclase DgcQ from Shigella dysenteriae serotype 1 (strain Sd197).